The following is a 323-amino-acid chain: Extracellular endo-alpha-(1-&gt;5)-L-arabinanase 1 (323 aa).

Positions 1-32 (MKKKKTWKRFLHFSSAALAAGLIFTSAAPAEA) are cleaved as a signal peptide. D44 serves as the catalytic Proton acceptor. Position 44 (D44) interacts with substrate. D107 contacts Ca(2+). Substrate-binding positions include G125 and 160–163 (NAID). E165 is a Ca(2+) binding site. Position 180-182 (180-182 (SFW)) interacts with substrate. E215 (proton donor) is an active-site residue. Position 287 (D287) interacts with Ca(2+).

The protein belongs to the glycosyl hydrolase 43 family. Ca(2+) serves as cofactor.

It localises to the secreted. It catalyses the reaction Endohydrolysis of (1-&gt;5)-alpha-arabinofuranosidic linkages in (1-&gt;5)-arabinans.. It functions in the pathway glycan metabolism; L-arabinan degradation. Functionally, involved in the degradation of arabinan and is a key enzyme in the complete degradation of the plant cell wall. Catalyzes the internal cleavage of alpha-(1-&gt;5)-L-arabinofuranosyl residues of linear 1,5-alpha-L-arabinan and of branched sugar beet arabinan. It displays no activity against heavily substituted arabinans or a range of other polysaccharides (larch wood arabinogalactan, wheat arabinoxylan and p-nitrophenyl-alpha-L-arabinofuranoside). The enzyme activity is progressively reduced as alpha-(1-&gt;5)-chains become shorter or more highly substituted. The sequence is that of Extracellular endo-alpha-(1-&gt;5)-L-arabinanase 1 (abnA) from Bacillus subtilis (strain 168).